Here is a 482-residue protein sequence, read N- to C-terminus: ATP synthase subunit beta (482 aa).

162 to 169 (GGAGVGKT) provides a ligand contact to ATP.

As to quaternary structure, F-type ATPases have 2 components, CF(1) - the catalytic core - and CF(0) - the membrane proton channel. CF(1) has five subunits: alpha(3), beta(3), gamma(1), delta(1), epsilon(1). CF(0) has four main subunits: a(1), b(1), b'(1) and c(9-12).

It is found in the cellular thylakoid membrane. It carries out the reaction ATP + H2O + 4 H(+)(in) = ADP + phosphate + 5 H(+)(out). With respect to regulation, inhibited by dicyclohexylcarbodiimide. Produces ATP from ADP in the presence of a proton gradient across the membrane. The catalytic sites are hosted primarily by the beta subunits. Functionally, the complex from the organism is particularly stable to disruption and remains functional after 6 hrs at 55 degrees Celsius. This is ATP synthase subunit beta from Thermosynechococcus vestitus (strain NIES-2133 / IAM M-273 / BP-1).